A 356-amino-acid chain; its full sequence is Biotin synthase (356 aa).

The tract at residues 1-28 (MTIQANVPTGDETSDEASRQTSNEASSE) is disordered. One can recognise a Radical SAM core domain in the interval 77–302 (EDVEVEGIIS…RTVLRYAGGR (226 aa)). [4Fe-4S] cluster-binding residues include cysteine 92, cysteine 96, and cysteine 99. Cysteine 135, cysteine 168, cysteine 227, and arginine 297 together coordinate [2Fe-2S] cluster.

This sequence belongs to the radical SAM superfamily. Biotin synthase family. Homodimer. [4Fe-4S] cluster serves as cofactor. The cofactor is [2Fe-2S] cluster.

It carries out the reaction (4R,5S)-dethiobiotin + (sulfur carrier)-SH + 2 reduced [2Fe-2S]-[ferredoxin] + 2 S-adenosyl-L-methionine = (sulfur carrier)-H + biotin + 2 5'-deoxyadenosine + 2 L-methionine + 2 oxidized [2Fe-2S]-[ferredoxin]. Its pathway is cofactor biosynthesis; biotin biosynthesis; biotin from 7,8-diaminononanoate: step 2/2. Functionally, catalyzes the conversion of dethiobiotin (DTB) to biotin by the insertion of a sulfur atom into dethiobiotin via a radical-based mechanism. The protein is Biotin synthase of Arthrobacter sp. (strain FB24).